We begin with the raw amino-acid sequence, 1016 residues long: DNA polymerase I (1016 aa).

Residues 1–308 (MPNSIWTSSD…MEFTTLTRRV (308 aa)) form the 5'-3' exonuclease domain. A disordered region spans residues 334–361 (GPDLDAAEPEPVAGGIPEVSGESVPMPP). In terms of domain architecture, 3'-5' exonuclease spans 394-630 (SAYVTIRDLV…MEARGITVDR (237 aa)). Residues 768–1016 (GRKIRTAFIS…RAATNWDEAH (249 aa)) form a polymerase region.

The protein belongs to the DNA polymerase type-A family. In terms of assembly, single-chain monomer with multiple functions.

It carries out the reaction DNA(n) + a 2'-deoxyribonucleoside 5'-triphosphate = DNA(n+1) + diphosphate. Functionally, in addition to polymerase activity, this DNA polymerase exhibits 3'-5' and 5'-3' exonuclease activity. The protein is DNA polymerase I (polA) of Rhizobium leguminosarum.